The chain runs to 31 residues: Photosystem II reaction center protein T (31 aa).

Residues 3–23 (ALVYTFLLISTLGIIFFGIFF) form a helical membrane-spanning segment.

It belongs to the PsbT family. In terms of assembly, PSII is composed of 1 copy each of membrane proteins PsbA, PsbB, PsbC, PsbD, PsbE, PsbF, PsbH, PsbI, PsbJ, PsbK, PsbL, PsbM, PsbT, PsbY, PsbZ, Psb30/Ycf12, at least 3 peripheral proteins of the oxygen-evolving complex and a large number of cofactors. It forms dimeric complexes.

It localises to the plastid. It is found in the chloroplast thylakoid membrane. In terms of biological role, found at the monomer-monomer interface of the photosystem II (PS II) dimer, plays a role in assembly and dimerization of PSII. PSII is a light-driven water plastoquinone oxidoreductase, using light energy to abstract electrons from H(2)O, generating a proton gradient subsequently used for ATP formation. This Nephroselmis olivacea (Green alga) protein is Photosystem II reaction center protein T.